The chain runs to 657 residues: Regulator of MON1-CCZ1 complex (657 aa).

Residues 471-637 (KKEMPHKFVI…NFTPGEHCEE (167 aa)) form the Mic1 domain.

The protein belongs to the RMC1 family. As to quaternary structure, found in a complex with RMC1, CCZ1 MON1A and MON1B.

Its subcellular location is the lysosome membrane. The protein localises to the late endosome membrane. Component of the CCZ1-MON1 RAB7A guanine exchange factor (GEF). Acts as a positive regulator of CCZ1-MON1A/B function necessary for endosomal/autophagic flux and efficient RAB7A localization. This is Regulator of MON1-CCZ1 complex from Homo sapiens (Human).